Consider the following 336-residue polypeptide: Aspartate--ammonia ligase (336 aa).

This sequence belongs to the class-II aminoacyl-tRNA synthetase family. AsnA subfamily.

It localises to the cytoplasm. It carries out the reaction L-aspartate + NH4(+) + ATP = L-asparagine + AMP + diphosphate + H(+). The protein operates within amino-acid biosynthesis; L-asparagine biosynthesis; L-asparagine from L-aspartate (ammonia route): step 1/1. This Clostridium perfringens (strain 13 / Type A) protein is Aspartate--ammonia ligase.